The following is a 246-amino-acid chain: Acetoacetate decarboxylase (246 aa).

The active-site Schiff-base intermediate with acetoacetate is Lys-116.

The protein belongs to the ADC family.

The enzyme catalyses acetoacetate + H(+) = acetone + CO2. In terms of biological role, catalyzes the conversion of acetoacetate to acetone and carbon dioxide. The chain is Acetoacetate decarboxylase from Burkholderia ambifaria (strain MC40-6).